A 537-amino-acid polypeptide reads, in one-letter code: ATP-dependent 6-phosphofructokinase 5, chloroplastic (537 aa).

A chloroplast-targeting transit peptide spans 1–52 (MDALSQAISSGISVPYKNNSSSLVPSHGLTSLILRKSRSPVNPSSRSRVSVR). The interval 35–64 (RKSRSPVNPSSRSRVSVRASEIQHSKTSAS) is disordered. Positions 39-54 (SPVNPSSRSRVSVRAS) are enriched in low complexity. Position 147 is a phosphoserine (S147). ATP-binding positions include G189, 253 to 254 (RG), and 278 to 281 (GNGT). N279 serves as a coordination point for Mg(2+). Substrate-binding positions include 307-309 (TID), 352-354 (MGR), E408, and 460-463 (YMIR). Catalysis depends on D309, which acts as the Proton acceptor.

The protein belongs to the phosphofructokinase type A (PFKA) family. PPi-dependent PFK group II subfamily. Atypical ATP-dependent clade 'X' sub-subfamily. In terms of assembly, homotetramer. Mg(2+) serves as cofactor. Expressed in roots, leaves, stems and flowers.

The protein localises to the plastid. It localises to the chloroplast. The enzyme catalyses beta-D-fructose 6-phosphate + ATP = beta-D-fructose 1,6-bisphosphate + ADP + H(+). It functions in the pathway carbohydrate degradation; glycolysis; D-glyceraldehyde 3-phosphate and glycerone phosphate from D-glucose: step 3/4. Allosterically activated by AMP. In terms of biological role, catalyzes the phosphorylation of D-fructose 6-phosphate to fructose 1,6-bisphosphate by ATP, the first committing step of glycolysis. This chain is ATP-dependent 6-phosphofructokinase 5, chloroplastic, found in Arabidopsis thaliana (Mouse-ear cress).